A 226-amino-acid chain; its full sequence is Nucleoside triphosphate pyrophosphatase (226 aa).

Aspartate 79 functions as the Proton acceptor in the catalytic mechanism. The segment at tryptophan 204–alanine 226 is disordered. Over residues arginine 206–proline 220 the composition is skewed to polar residues.

This sequence belongs to the Maf family. The cofactor is a divalent metal cation.

It is found in the cytoplasm. The enzyme catalyses a ribonucleoside 5'-triphosphate + H2O = a ribonucleoside 5'-phosphate + diphosphate + H(+). It carries out the reaction a 2'-deoxyribonucleoside 5'-triphosphate + H2O = a 2'-deoxyribonucleoside 5'-phosphate + diphosphate + H(+). Its function is as follows. Nucleoside triphosphate pyrophosphatase. May have a dual role in cell division arrest and in preventing the incorporation of modified nucleotides into cellular nucleic acids. The polypeptide is Nucleoside triphosphate pyrophosphatase (Salinispora tropica (strain ATCC BAA-916 / DSM 44818 / JCM 13857 / NBRC 105044 / CNB-440)).